Reading from the N-terminus, the 27-residue chain is M-lycotoxin-Hc2a (27 aa).

In terms of tissue distribution, expressed by the venom gland.

The protein resides in the secreted. In terms of biological role, forms pore that permeabilize the cell membrane. Promotes efflux of calcium from synaptosomes, causes hemolysis, and dissipates voltage gradients across muscle membrane. Potently inhibits the growth of bacteria, yeast and Leishmania. May function both in the prey capture strategy as well as protection from infectious organisms arising from prey ingestion. The sequence is that of M-lycotoxin-Hc2a from Hogna carolinensis (Carolina wolf spider).